Here is a 555-residue protein sequence, read N- to C-terminus: MKKKNTENVRIIALGGVGEIGKNLYVIEIDSDIFVVDAGLMHPENEMLGIDVVIPDISYLIERADRVKAIFLTHGHDENIGGVFYLLNKLSVPVYGTKLTLALLREKLKQYGHNRKTDLREIHSKSVITFESTKVSFFRTIHSIPDSVGVSFKTSLGSIVCTGDFKFDQTPALNQTCDIGEIAKIGNSGVLALLSDSANAERPGYTPSEAAVSGEISDALYNSQNRVIIAVFASNINRIQQVIHAAAQNGRKIAVAGKNLQSVLQLARKLGYIEADDELFISVQDVKKYPKREVAIITAGSQGEPLAALTRMANKAHKQLNIEEGDTVVIASTPIPGQELIYSKTVDLLARAGAQVIFAQKRVHVSGHGSQEELKLMINLLKPKYLIPVNGEYRMQKAHSKIAEETGMKRSDIFLIEKGDVVEFRGQNVKIGDKVPYGNILIDGLGVGDIGNIVLRDRRLLSQDGILIVVITLDKQKKHLVSGPEIITRGFVYVRESEGLIVQATELVRSIVTEATETSNVEWSTLKQAMRDALNQFLYEKTKRKPMIIPIIMEV.

The Zn(2+) site is built by H74, H76, H142, and D164. Position 364–368 (364–368) interacts with substrate; the sequence is HVSGH.

This sequence belongs to the metallo-beta-lactamase superfamily. RNA-metabolizing metallo-beta-lactamase-like family. Bacterial RNase J subfamily. As to quaternary structure, unclear whether it forms homodimers or belongs to a larger complex. According to probably does not form homodimers, while shows homodimer formation. Both reports show RNase J1 and J2 interaction, probably as a heterotetramer shows it is a component of a possible RNA degradosome complex composed of rny, rnjA, rnjB, pnp, pfkA and eno, while finds no evidence of an RNA degradosome complex. Zn(2+) serves as cofactor.

The protein resides in the cytoplasm. In terms of biological role, endonucleolytically cleaves the 5'-leader sequence of certain mRNAs. Endonuclease digestion by the RNase J1/J2 complex occurs at a different site and in some cases more efficiently than J1 or J2 alone. The exonuclease activity of the J1/J2 complex is highly processive on substrates longer than 5 nucleotides, on shorter substrates is distributive. Plays a role in mRNA maturation and stability. Appears to have a limited effect on 16S rRNA maturation, despite its similarity to RNase J1. This subunit alone has very poor 5'-3' exonuclease activity. The sequence is that of Ribonuclease J2 from Bacillus subtilis (strain 168).